We begin with the raw amino-acid sequence, 141 residues long: Large ribosomal subunit protein bL17 (141 aa).

This sequence belongs to the bacterial ribosomal protein bL17 family. Part of the 50S ribosomal subunit. Contacts protein L32.

This is Large ribosomal subunit protein bL17 from Sinorhizobium fredii (strain NBRC 101917 / NGR234).